We begin with the raw amino-acid sequence, 242 residues long: DnaJ homolog subfamily B member 3 (242 aa).

The region spanning 1–69 is the J domain; it reads MVDYYEVLGV…RKREVYDRCG (69 aa).

As to expression, testis specific. Expression is confined to the germline without any contribution of the somatic components.

May operate as a co-chaperone of the male germ cell- and haploid stage-specific Hsp70 proteins. The protein is DnaJ homolog subfamily B member 3 (Dnajb3) of Mus musculus (Mouse).